Consider the following 433-residue polypeptide: MSISKTLDKNIKQVNGPINVVRLQGKIGSVNKVVYLFMDRHLAVEYQTECDNIFAKDVHMFFADSFKNIGSTGKTYDFFLEKDAEEITPKIPEELNTSKTKYISEVGKMFKKIFKYDPKANRALTSDIFQNTRFHYIDFRGYLYMDIFEPIDMANYVMENIWNKRDLKSEDLNRIAGQLNIVSQQCQLILQIMDSYSNNKNRDKNNSERQYGVRKITPLKYTTVSESYQKTYKQQKQIQIDYIRYFINKIYTKYNDNTIKSKLINRLEYFKNGIRNLNTEVNNIIVDINNIMTEMTSSSGKLVQYNEKWYYGMPYEKEIMYIADLYNKLRNLNGDSVSYIARLIDIYFLRRFLDKDYITNAILYSGANHSLTDIDILVKDFDFKITHVAYSKYPINQITNSVKKAEFGMVNIQPLFDNNEQCSDVTYFPDNFL.

This sequence belongs to the mimivirus R160 family.

The protein resides in the virion. This is an uncharacterized protein from Acanthamoeba polyphaga mimivirus (APMV).